The following is a 101-amino-acid chain: uncharacterized protein (101 aa).

This is an uncharacterized protein from Acanthamoeba polyphaga mimivirus (APMV).